Consider the following 89-residue polypeptide: Small ribosomal subunit protein uS14 (89 aa).

Belongs to the universal ribosomal protein uS14 family. Part of the 30S ribosomal subunit. Contacts proteins S3 and S10.

Functionally, binds 16S rRNA, required for the assembly of 30S particles and may also be responsible for determining the conformation of the 16S rRNA at the A site. The polypeptide is Small ribosomal subunit protein uS14 (Chlorobaculum parvum (strain DSM 263 / NCIMB 8327) (Chlorobium vibrioforme subsp. thiosulfatophilum)).